Consider the following 474-residue polypeptide: Trehalose-6-phosphate synthase (474 aa).

D-glucose 6-phosphate is bound at residue arginine 10. 22–23 (GG) lines the UDP-alpha-D-glucose pocket. D-glucose 6-phosphate is bound by residues tyrosine 77 and aspartate 131. UDP-alpha-D-glucose contacts are provided by arginine 263 and lysine 268. Arginine 301 contacts D-glucose 6-phosphate. UDP-alpha-D-glucose is bound by residues phenylalanine 340 and 366-370 (LVAKE).

Belongs to the glycosyltransferase 20 family. In terms of assembly, homotetramer.

It catalyses the reaction D-glucose 6-phosphate + UDP-alpha-D-glucose = alpha,alpha-trehalose 6-phosphate + UDP + H(+). It participates in glycan biosynthesis; trehalose biosynthesis. Its function is as follows. Probably involved in the osmoprotection via the biosynthesis of trehalose. Catalyzes the transfer of glucose from UDP-alpha-D-glucose (UDP-Glc) to D-glucose 6-phosphate (Glc-6-P) to form trehalose-6-phosphate. Acts with retention of the anomeric configuration of the UDP-sugar donor. The chain is Trehalose-6-phosphate synthase from Shigella dysenteriae serotype 1 (strain Sd197).